The primary structure comprises 280 residues: 4-diphosphocytidyl-2-C-methyl-D-erythritol kinase (280 aa).

Lysine 8 is an active-site residue. 91-101 (PVSAGLAGGSS) lines the ATP pocket. Aspartate 133 is a catalytic residue.

Belongs to the GHMP kinase family. IspE subfamily.

The catalysed reaction is 4-CDP-2-C-methyl-D-erythritol + ATP = 4-CDP-2-C-methyl-D-erythritol 2-phosphate + ADP + H(+). The protein operates within isoprenoid biosynthesis; isopentenyl diphosphate biosynthesis via DXP pathway; isopentenyl diphosphate from 1-deoxy-D-xylulose 5-phosphate: step 3/6. Its function is as follows. Catalyzes the phosphorylation of the position 2 hydroxy group of 4-diphosphocytidyl-2C-methyl-D-erythritol. This is 4-diphosphocytidyl-2-C-methyl-D-erythritol kinase from Clostridium novyi (strain NT).